A 291-amino-acid chain; its full sequence is MFKGSYVALITPFKNGAVDEAAFVKLVEWQIEQGTHGLVPCGTTGESPTLSHDEHKRVVELCVKTAKGRVPVIAGAGSNNTVEAIELTRFAKKVGADAVLSVTGYYNKPSQEGIFAHFKAVNDAVDIPIILYNIPGRTIVDITLETMTRLFELKNVVGVKDATANLARVSLQRQEMGAEFCQLSGEDATALGFNAHGGVGCISVTANVAPALCSAFQEATLDGDYRKALEIQDRLMPLHNALFVDPNPAPVKYAANLLGLCANELRLPLVPASAAAEQKVLGAMRSAGLLN.

Position 44 (T44) interacts with pyruvate. Y132 (proton donor/acceptor) is an active-site residue. Residue K160 is the Schiff-base intermediate with substrate of the active site. I202 lines the pyruvate pocket.

The protein belongs to the DapA family. As to quaternary structure, homotetramer; dimer of dimers.

The protein localises to the cytoplasm. The enzyme catalyses L-aspartate 4-semialdehyde + pyruvate = (2S,4S)-4-hydroxy-2,3,4,5-tetrahydrodipicolinate + H2O + H(+). Its pathway is amino-acid biosynthesis; L-lysine biosynthesis via DAP pathway; (S)-tetrahydrodipicolinate from L-aspartate: step 3/4. Functionally, catalyzes the condensation of (S)-aspartate-beta-semialdehyde [(S)-ASA] and pyruvate to 4-hydroxy-tetrahydrodipicolinate (HTPA). This is 4-hydroxy-tetrahydrodipicolinate synthase from Parvibaculum lavamentivorans (strain DS-1 / DSM 13023 / NCIMB 13966).